The sequence spans 303 residues: Vesicle-trafficking protein SEC22c (303 aa).

Topologically, residues 1–183 are cytoplasmic; the sequence is MSMILFASIV…EPAPNLRMKP (183 aa). Residues 8 to 119 enclose the Longin domain; it reads SIVRVRDGLP…YAFLEFDSVI (112 aa). A helical transmembrane segment spans residues 184 to 204; it reads VTALGVLSLVLNIMCAALNLI. Residues 205-223 lie on the Lumenal side of the membrane; it reads RGVHLAEHSLQVAQEEVGN. A helical membrane pass occupies residues 224–244; the sequence is ILAFFIPSVACIVQCYLYLFY. At 245–248 the chain is on the cytoplasmic side; that stretch reads SPAR. A helical membrane pass occupies residues 249–269; sequence TLKVLLMLASICLGNAYLHGL. A topological domain (lumenal) is located at residue R270. A helical transmembrane segment spans residues 271-291; that stretch reads NTWQILFHVGVAFLSSYQILT. Over 292 to 303 the chain is Cytoplasmic; that stretch reads RQLQERQSDYGV.

It belongs to the synaptobrevin family.

It is found in the endoplasmic reticulum membrane. In terms of biological role, may be involved in vesicle transport between the ER and the Golgi complex. This chain is Vesicle-trafficking protein SEC22c (Sec22c), found in Mus musculus (Mouse).